Here is a 210-residue protein sequence, read N- to C-terminus: Large ribosomal subunit protein uL3 (210 aa).

Positions 123 to 144 (KRHGQSRGPMAHGSRYHRRPGS) are disordered.

Belongs to the universal ribosomal protein uL3 family. Part of the 50S ribosomal subunit. Forms a cluster with proteins L14 and L19.

One of the primary rRNA binding proteins, it binds directly near the 3'-end of the 23S rRNA, where it nucleates assembly of the 50S subunit. This chain is Large ribosomal subunit protein uL3, found in Alkaliphilus metalliredigens (strain QYMF).